The primary structure comprises 334 residues: L-lactate dehydrogenase B chain (334 aa).

Alanine 2 bears the N-acetylalanine mark. Lysine 7 is modified (N6-acetyllysine). Phosphoserine occurs at positions 11 and 44. Residues 30–58 (GQVGMACAISILGKSLADELALVDVLEDK) and arginine 100 contribute to the NAD(+) site. Position 58 is an N6-acetyllysine (lysine 58). Arginine 107 serves as a coordination point for substrate. Lysine 119 carries the N6-acetyllysine modification. Residue asparagine 139 participates in NAD(+) binding. The substrate site is built by asparagine 139 and arginine 170. Histidine 194 functions as the Proton acceptor in the catalytic mechanism. Residue tyrosine 240 is modified to Phosphotyrosine. Threonine 249 lines the substrate pocket. An N6-acetyllysine modification is found at lysine 329.

The protein belongs to the LDH/MDH superfamily. LDH family. As to quaternary structure, homotetramer. Interacts with PTEN upstream reading frame protein MP31; the interaction leads to inhibition of mitochondrial lactate dehydrogenase activity, preventing conversion of lactate to pyruvate in mitochondria.

The protein localises to the cytoplasm. Its subcellular location is the mitochondrion inner membrane. It catalyses the reaction (S)-lactate + NAD(+) = pyruvate + NADH + H(+). Its pathway is fermentation; pyruvate fermentation to lactate; (S)-lactate from pyruvate: step 1/1. In terms of biological role, interconverts simultaneously and stereospecifically pyruvate and lactate with concomitant interconversion of NADH and NAD(+). The chain is L-lactate dehydrogenase B chain (Ldhb) from Mus musculus (Mouse).